The sequence spans 319 residues: MRNQKVNRTVLIGAGFVGSSYAFTLINQGITDELVIIDLNKDKAMGDVMDLNHGKAFAPHPVKTWYGTYDDCKEADIVCVCAGANQKPGETRLDLVEKNLKIFKGIIGEVMASGFDGIFLVATNPVDILTYATWKFSGLPKERVIGSGTTLDTARFRYLLSEYFGVAAHNAHGYIIGEHGDTELPVWSHANIGGVPVSDLLKRNEKYKAEDLDELFDNVKNAAYHIIEKKGATYYGVAMSLARITKAIYRNEEAILTVSAHLDGEFGENDVYIGVPAVVGRCGAREIVELDLNEKEKQQFKHSAGVLKAILKPHFELQA.

NAD(+) is bound by residues Val-17, Asp-38, Lys-43, Tyr-69, and 83–84 (GA). Substrate is bound by residues Gln-86, Arg-92, and 124-127 (NPVD). NAD(+)-binding positions include 122-124 (ATN) and Ser-147. 152–155 (DTAR) lines the substrate pocket. Positions 157 and 172 each coordinate beta-D-fructose 1,6-bisphosphate. The active-site Proton acceptor is His-179. A Phosphotyrosine modification is found at Tyr-224. Thr-233 contacts substrate.

Belongs to the LDH/MDH superfamily. LDH family. As to quaternary structure, homotetramer.

Its subcellular location is the cytoplasm. It carries out the reaction (S)-lactate + NAD(+) = pyruvate + NADH + H(+). It functions in the pathway fermentation; pyruvate fermentation to lactate; (S)-lactate from pyruvate: step 1/1. Its activity is regulated as follows. Allosterically activated by fructose 1,6-bisphosphate (FBP). Catalyzes the conversion of lactate to pyruvate. This chain is L-lactate dehydrogenase, found in Bacillus licheniformis (strain ATCC 14580 / DSM 13 / JCM 2505 / CCUG 7422 / NBRC 12200 / NCIMB 9375 / NCTC 10341 / NRRL NRS-1264 / Gibson 46).